Here is a 397-residue protein sequence, read N- to C-terminus: Proteasome-activating nucleotidase (397 aa).

Residues Gly12–Pro58 are a coiled coil. Residues Gly182–Leu187 and His321 contribute to the ATP site. The docks into pockets in the proteasome alpha-ring to cause gate opening stretch occupies residues Met395–Gly397.

Belongs to the AAA ATPase family. In terms of assembly, homohexamer. The hexameric complex has a two-ring architecture resembling a top hat that caps the 20S proteasome core at one or both ends. Upon ATP-binding, the C-terminus of PAN interacts with the alpha-rings of the proteasome core by binding to the intersubunit pockets.

The protein localises to the cytoplasm. Functionally, ATPase which is responsible for recognizing, binding, unfolding and translocation of substrate proteins into the archaeal 20S proteasome core particle. Is essential for opening the gate of the 20S proteasome via an interaction with its C-terminus, thereby allowing substrate entry and access to the site of proteolysis. Thus, the C-termini of the proteasomal ATPase function like a 'key in a lock' to induce gate opening and therefore regulate proteolysis. Unfolding activity requires energy from ATP hydrolysis, whereas ATP binding alone promotes ATPase-20S proteasome association which triggers gate opening, and supports translocation of unfolded substrates. The sequence is that of Proteasome-activating nucleotidase from Thermococcus gammatolerans (strain DSM 15229 / JCM 11827 / EJ3).